Here is a 292-residue protein sequence, read N- to C-terminus: Siderophore triacetylfusarinine C esterase (292 aa).

6 residues coordinate triacetylfusarinine C: arginine 97, serine 148, tyrosine 149, serine 174, tryptophan 176, and histidine 267.

The protein belongs to the esterase D family.

The protein resides in the cytoplasm. The catalysed reaction is triacetylfusarinine C + 3 H2O = 3 N-acetylfusarinine + Fe(3+). Its function is as follows. Displays specific triacetylfusarinine C (TAFC) esterase activity but does not hydrolyze fusarinine C, which has the same core structure as TAFC. Hydrolysis optimizes but is not essential for TAFC-mediated iron uptake. Both extra- and intracellular siderophores have been shown to be crucial for the virulence. Subsequent to chelation of iron and uptake, FsC and TAFC are hydrolyzed and the iron is transferred to the metabolism or to the intracellular siderophore ferricrocin (FC) for transport and storage of iron. Hydrolyzes both TAFC and DF-TAFC with equal efficiencies, suggesting that its function might not be restricted to the release of iron from the siderophore but might also include the degradation of the iron-free chelator to protect cells. The chain is Siderophore triacetylfusarinine C esterase from Aspergillus fumigatus (strain ATCC MYA-4609 / CBS 101355 / FGSC A1100 / Af293) (Neosartorya fumigata).